The primary structure comprises 415 residues: Granaticin polyketide putative beta-ketoacyl synthase 2 (415 aa).

The 401-residue stretch at 6-406 folds into the Ketosynthase family 3 (KS3) domain; sequence RRRAVVTGLS…GFNSAVVVTL (401 aa).

This sequence belongs to the thiolase-like superfamily. Beta-ketoacyl-ACP synthases family.

The protein operates within antibiotic biosynthesis; granaticin biosynthesis. The sequence is that of Granaticin polyketide putative beta-ketoacyl synthase 2 (gra-orf2) from Streptomyces violaceoruber.